Reading from the N-terminus, the 298-residue chain is Small ribosomal subunit protein uS2 (298 aa).

Basic and acidic residues-rich tracts occupy residues 237–259 and 280–298; these read QSKE…DGQK and PKSE…ENKG. The tract at residues 237 to 298 is disordered; sequence QSKELDDKAD…DAAKLPENKG (62 aa).

It belongs to the universal ribosomal protein uS2 family.

The sequence is that of Small ribosomal subunit protein uS2 from Neorickettsia sennetsu (strain ATCC VR-367 / Miyayama) (Ehrlichia sennetsu).